The sequence spans 381 residues: GDP-mannose transporter (381 aa).

At 1 to 40 (MADDKKTNDYTVEMDKLDQGSKNFEAPLPPVQPRSAPNAQ) the chain is on the cytoplasmic side. A helical transmembrane segment spans residues 41–61 (LANNPILPVLAYCGSSIMMTV). At 62-71 (MNKYVLSGTD) the chain is on the lumenal side. The helical transmembrane segment at 72 to 92 (FNLNFLLLCVQSIVCIVAIQT) threads the bilayer. The Cytoplasmic portion of the chain corresponds to 93-110 (CKASKLITYRDFNADEAK). The chain crosses the membrane as a helical span at residues 111-127 (KWFPITLLLIGMIYTGS). Topologically, residues 128-134 (KALQFLS) are lumenal. The helical transmembrane segment at 135 to 151 (IPVYTIFKNLTIILIAY) threads the bilayer. At 152 to 160 (GEVLWFGGS) the chain is on the cytoplasmic side. Residues 161–182 (VTGLTLFSFGLMVLSSIIAAWA) traverse the membrane as a helical segment. The Lumenal portion of the chain corresponds to 183-200 (DIKHAVESSGDATAKVST). The chain crosses the membrane as a helical span at residues 201 to 221 (LNAGYIWMLINCLCTSSYVLG). Topologically, residues 222 to 233 (MRKRIKLTNFKD) are cytoplasmic. The helical transmembrane segment at 234-254 (FDTMFYNNLLSIPVLLVLTFL) threads the bilayer. The Lumenal segment spans residues 255–274 (MEDWSSANITRNFPPADRNG). The N-linked (GlcNAc...) asparagine glycan is linked to Asn262. A helical membrane pass occupies residues 275–295 (IMFAMILSGLSSVFISYTSAW). At 296–303 (CVRVTSST) the chain is on the cytoplasmic side. The helical transmembrane segment at 304 to 324 (TYSMVGALNKLPIAVSGLIFF) threads the bilayer. The Lumenal portion of the chain corresponds to 325-327 (DAP). Residues 328 to 348 (VTFPSVSAIVVGFVSGIVYAV) traverse the membrane as a helical segment. Over 349–381 (AKIKQNAKPKTGVLPTSNPVSASSQSMRDSLRS) the chain is Cytoplasmic. The disordered stretch occupies residues 362 to 381 (LPTSNPVSASSQSMRDSLRS).

Belongs to the TPT transporter family. SLC35D subfamily. In terms of assembly, homooligomer.

Its subcellular location is the golgi apparatus membrane. The protein resides in the cytoplasmic vesicle membrane. The protein localises to the endoplasmic reticulum membrane. Involved in the import of GDP-mannose from the cytoplasm into the Golgi lumen. The chain is GDP-mannose transporter (gmt1) from Aspergillus clavatus (strain ATCC 1007 / CBS 513.65 / DSM 816 / NCTC 3887 / NRRL 1 / QM 1276 / 107).